Consider the following 1274-residue polypeptide: Myosin-1 (1274 aa).

The segment at 1 to 28 (MAPSKKAGKKGAVGGFLSGASKPQKVQK) is disordered. A Myosin motor domain is found at 41-721 (AGVPDMTLLS…TLFYLEGERD (681 aa)). 134–141 (GESGAGKT) provides a ligand contact to ATP. Position 363 is a phosphoserine (serine 363). Residues 410–492 (VIGVLDIYGF…AGIFATLNDA (83 aa)) are actin-binding. 2 IQ domains span residues 725-745 (HTMASRIQRAWRAYVRRKHEA) and 746-771 (ATKIQRFWRNQREALVYERKRDYGHQ). The TH1 domain occupies 779-969 (RRRFSLLGMR…TIQVGSGEPP (191 aa)). Disordered stretches follow at residues 951-1029 (RGDA…PVVT), 1042-1071 (ARAPPSIPGRAAAPPPPPPPPPPAGPPKEF), and 1116-1248 (PSNY…QVAQ). A compositionally biased stretch (polar residues) spans 957–974 (KSHTIQVGSGEPPNSLSN). Over residues 1042–1053 (ARAPPSIPGRAA) the composition is skewed to low complexity. 2 stretches are compositionally biased toward pro residues: residues 1054–1067 (APPPPPPPPPPAGP) and 1126–1138 (APPPPPPPPPPSR). The SH3 domain maps to 1067–1125 (PPKEFYKALYNFTGQEGEMNLVKGEEVEVKEKDDNGWWMVVKNGQEGWAPSNYLKKVEQ). Composition is skewed to low complexity over residues 1139–1157 (PVAARPPAASSAPTAPAVT) and 1170–1226 (AASA…IGGK).

It belongs to the TRAFAC class myosin-kinesin ATPase superfamily. Myosin family. In terms of processing, phosphorylation of the TEDS site (Ser-363) is required for the polarization of the actin cytoskeleton. Phosphorylation probably activates the myosin-I ATPase activity.

It localises to the cytoplasm. The protein localises to the cytoskeleton. Its subcellular location is the actin patch. Type-I myosin implicated in the organization of the actin cytoskeleton. Required for proper actin cytoskeleton polarization. At the cell cortex, assembles in patch-like structures together with proteins from the actin-polymerizing machinery and promotes actin assembly. Functions as actin nucleation-promoting factor (NPF) for the Arp2/3 complex. The chain is Myosin-1 (MYO1) from Cryptococcus neoformans var. neoformans serotype D (strain B-3501A) (Filobasidiella neoformans).